Reading from the N-terminus, the 729-residue chain is Leucine-rich repeat flightless-interacting protein 1 (729 aa).

N-acetylthreonine is present on Thr2. Ser16 carries the post-translational modification Phosphoserine. Over residues 40-65 (IRMKELERQQKEVEERPDKDFAEKGS) the composition is skewed to basic and acidic residues. The segment at 40–98 (IRMKELERQQKEVEERPDKDFAEKGSRNMPSLSAATLASLGGTSSRRGSGDTSISMDTE) is disordered. Low complexity predominate over residues 78–94 (SLGGTSSRRGSGDTSIS). Ser83, Ser84, Ser88, Asp90, Ser92, and Thr97 each carry phosphoserine. Residues 94-194 (SMDTEASIRE…LRQREEMLEK (101 aa)) are a coiled coil. Lys249 is covalently cross-linked (Glycyl lysine isopeptide (Lys-Gly) (interchain with G-Cter in SUMO1)). The segment at 253–729 (VEKVGQRETL…SKSKEDCTMS (477 aa)) is disordered. Residues 260 to 272 (ETLQNSEQEQPKP) show a composition bias toward polar residues. A compositionally biased stretch (basic and acidic residues) spans 277-297 (DCVDRGVSHPGEKAENQRPAE). Ser302 carries the phosphoserine modification. Positions 313–326 (QQVQSQDQENTSDL) are enriched in polar residues. Basic and acidic residues predominate over residues 327–343 (KNSEQIESHKVTNKSDS). The span at 344–354 (RASNSPEQSSC) shows a compositional bias: polar residues. 2 positions are modified to phosphoserine: Ser346 and Ser348. 2 stretches are compositionally biased toward basic and acidic residues: residues 435–445 (KGTENHGESCL) and 482–494 (KADD…EKPI). Residues 465 to 567 (EEAIVQIPQA…KNKKKKAATP (103 aa)) form a DNA-binding region. Over residues 506–523 (INQSGHQDTTGPGSTDAQ) the composition is skewed to polar residues. Phosphoserine occurs at positions 538 and 547. The segment covering 550–564 (KKTKNKKKKNKKKKA) has biased composition (basic residues). Over residues 608 to 618 (QKIRAGSREPV) the composition is skewed to basic and acidic residues. Ser614 and Ser670 each carry phosphoserine. 2 stretches are compositionally biased toward polar residues: residues 667–684 (CDTS…SQHG) and 693–710 (LDNS…SESG). A compositionally biased stretch (basic and acidic residues) spans 713 to 729 (AREEVGNSKSKEDCTMS).

Belongs to the LRRFIP family. As to quaternary structure, homodimer. May also form higher oligomers. Interacts with FLII. Interacts with MYD88. Competes with FLII for MyD88-binding, even in the absence of LPS. In terms of tissue distribution, ubiquitously expressed.

It localises to the nucleus. It is found in the cytoplasm. Transcriptional repressor which preferentially binds to the GC-rich consensus sequence (5'-AGCCCCCGGCG-3') and may regulate expression of TNF, EGFR and PDGFA. May control smooth muscle cells proliferation following artery injury through PDGFA repression. May also bind double-stranded RNA. Positively regulates Toll-like receptor (TLR) signaling in response to agonist probably by competing with the negative FLII regulator for MYD88-binding. This chain is Leucine-rich repeat flightless-interacting protein 1 (Lrrfip1), found in Mus musculus (Mouse).